An 878-amino-acid polypeptide reads, in one-letter code: DNA mismatch repair protein MutS (878 aa).

Residue 618 to 625 (GPNMGGKS) participates in ATP binding. Composition is skewed to basic and acidic residues over residues 800 to 811 (LEEESSRQRAEP) and 863 to 878 (GADK…ARSR). 2 disordered regions span residues 800–842 (LEEE…PDEL) and 859–878 (SGEE…ARSR).

It belongs to the DNA mismatch repair MutS family.

In terms of biological role, this protein is involved in the repair of mismatches in DNA. It is possible that it carries out the mismatch recognition step. This protein has a weak ATPase activity. The chain is DNA mismatch repair protein MutS from Alkalilimnicola ehrlichii (strain ATCC BAA-1101 / DSM 17681 / MLHE-1).